The following is a 397-amino-acid chain: Chorismate synthase (397 aa).

2 residues coordinate NADP(+): R40 and R46. FMN is bound by residues 129-131, 257-258, G302, 317-321, and R343; these read RSS, QA, and KPISS.

The protein belongs to the chorismate synthase family. Homotetramer. It depends on FMNH2 as a cofactor.

The enzyme catalyses 5-O-(1-carboxyvinyl)-3-phosphoshikimate = chorismate + phosphate. Its pathway is metabolic intermediate biosynthesis; chorismate biosynthesis; chorismate from D-erythrose 4-phosphate and phosphoenolpyruvate: step 7/7. In terms of biological role, catalyzes the anti-1,4-elimination of the C-3 phosphate and the C-6 proR hydrogen from 5-enolpyruvylshikimate-3-phosphate (EPSP) to yield chorismate, which is the branch point compound that serves as the starting substrate for the three terminal pathways of aromatic amino acid biosynthesis. This reaction introduces a second double bond into the aromatic ring system. This is Chorismate synthase from Chlorobium limicola (strain DSM 245 / NBRC 103803 / 6330).